The sequence spans 1135 residues: Potassium channel subfamily T member 2 (1135 aa).

Topologically, residues 1–63 are cytoplasmic; it reads MVDLESEVPP…KNQRSSLRIR (63 aa). A helical membrane pass occupies residues 64-84; sequence LFNFSLKLLSCLLYIIRVLLE. At 85–101 the chain is on the extracellular side; it reads NPSQGNEWSHIFWVNRS. The N-linked (GlcNAc...) asparagine glycan is linked to N99. The chain crosses the membrane as a helical span at residues 102–122; it reads LPLWGLQVSVALISLFETILL. At 123-137 the chain is on the cytoplasmic side; the sequence is GYLSYKGNIWEQILR. Residues 138 to 158 form a helical membrane-spanning segment; that stretch reads IPFILEIINAVPFIISIFWPS. Topologically, residues 159-164 are extracellular; it reads LRNLFV. Residues 165–185 traverse the membrane as a helical segment; sequence PVFLNCWLAKHALENMINDLH. Topologically, residues 186–198 are cytoplasmic; sequence RAIQRTQSAMFNQ. Residues 199-219 form a helical membrane-spanning segment; sequence VLILISTLLCLIFTCICGIQH. The Extracellular segment spans residues 220–228; the sequence is LERIGKKLN. Residues 229 to 249 constitute an intramembrane region (pore-forming); it reads LFDSLYFCIVTFSTVGFGDVT. Over 250–256 the chain is Extracellular; the sequence is PETWSSK. Residues 257–277 form a helical membrane-spanning segment; that stretch reads LFVVAMICVALVVLPIQFEQL. At 278 to 1135 the chain is on the cytoplasmic side; the sequence is AYLWMERQKS…GQDSREETQL (858 aa). 2 RCK N-terminal domains span residues 299 to 435 and 718 to 858; these read EKHV…DHVV and NKLI…CYSL. Disordered regions lie at residues 977-1010, 1017-1036, and 1113-1135; these read VEEW…HPLL, WARR…AEKI, and SEPS…ETQL. Residues 1017-1030 are compositionally biased toward basic residues; that stretch reads WARRLSRKGPKHSG. Residues 1118-1127 show a composition bias toward polar residues; it reads RNSICNVTGQ.

The protein belongs to the potassium channel family. Calcium-activated (TC 1.A.1.3) subfamily. KCa4.2/KCNT2 sub-subfamily. Homotetramer. Forms heteromeric channels with KCNT1; these heterodimer channels differ from the homomers in their unitary conductance, kinetic behavior, subcellular localization, and response to activation of protein kinase C. In terms of processing, phosphorylated by protein kinase C. Phosphorylation of the C-terminal domain inhibits channel activity.

The protein localises to the cell membrane. The enzyme catalyses K(+)(in) = K(+)(out). With respect to regulation, are normally in a closed state unless activated by an increase in intracellular Na(+) and Cl(-). Inhibited upon stimulation of G-protein coupled receptors, such as CHRM1 and GRM1. There is conflicting data about the effect of ATP on KNCT2 channels activity. Intracellular ATP was initially report to inhibit the channel activity. However, others studies conclude that KNCT2 channels are not inhibited by intracellular ATP. Sodium-activated and chloride-activated potassium channel. Produces rapidly activating outward rectifier K(+) currents. Contributes to regulate neuronal excitability. The sequence is that of Potassium channel subfamily T member 2 (KCNT2) from Homo sapiens (Human).